The primary structure comprises 353 residues: UPF0283 membrane protein YcjF (353 aa).

Residues 1–19 (MSEPLKPRIDFAEPLKEEP) are compositionally biased toward basic and acidic residues. The disordered stretch occupies residues 1 to 35 (MSEPLKPRIDFAEPLKEEPTSAFKAQQTFSEAESR). The next 3 helical transmembrane spans lie at 70-90 (MVMG…VQWT), 100-120 (VALG…GSVV), and 213-233 (ESTL…FIAW).

This sequence belongs to the UPF0283 family.

Its subcellular location is the cell inner membrane. This is UPF0283 membrane protein YcjF from Salmonella dublin (strain CT_02021853).